The following is an 850-amino-acid chain: Protein SEY1 (850 aa).

The interval 1 to 27 (MSDLPPPDLGSEEISVSPTSSSSSFVP) is disordered. Residues 1–741 (MSDLPPPDLG…KRALIQHVTH (741 aa)) lie on the Cytoplasmic side of the membrane. The span at 12–27 (EEISVSPTSSSSSFVP) shows a compositional bias: low complexity. The region spanning 64–297 (NNNYHIVSVF…NEDFLFKKYY (234 aa)) is the GB1/RHD3-type G domain. Residue 74–81 (GSQSTGKS) participates in GTP binding. The chain crosses the membrane as a helical span at residues 742–762 (IPYYIYIVILVLGWNEFMAVL). Over 763 to 765 (RNP) the chain is Lumenal. The helical transmembrane segment at 766-786 (FFFTLLLMLGAGTYVLYHLNL) threads the bilayer. Residues 787–850 (LKPAMVVVQR…SDLTPPGEGS (64 aa)) are Cytoplasmic-facing. The segment at 816-850 (QPQEHAKRLSKMAGITEDKPEEIEMSDLTPPGEGS) is disordered.

This sequence belongs to the TRAFAC class dynamin-like GTPase superfamily. GB1/RHD3 GTPase family. RHD3 subfamily.

It localises to the endoplasmic reticulum membrane. Cooperates with the reticulon proteins and tubule-shaping DP1 family proteins to generate and maintain the structure of the tubular endoplasmic reticulum network. Has GTPase activity, which is required for its function in ER organization. This is Protein SEY1 from Meyerozyma guilliermondii (strain ATCC 6260 / CBS 566 / DSM 6381 / JCM 1539 / NBRC 10279 / NRRL Y-324) (Yeast).